The primary structure comprises 586 residues: MKQSVSAEQIELKSSLPGSKKVYVDGPREGMKVPMREIEQSDTNGVPNPPIRVYDTSGPYTDPEYKVELEKGLQAPRHSWILERGDVEAYEGREVKPEDDGVKVASKHTPVFPQMDRKPLRAKQGANVTQMHYARNGIITSEMEYVAIREGVEPEFVRKEIAEGRAILPANINHPEAEPMIIGRNFHVKVNANIGNSAVSSSIAEEVEKMTWATRWGADTIMDLSTGKNIHTTREWIIRNAPVPVGTVPIYQALEKVNGIAEDLTWEVYRDTLIEQAEQGVDYFTIHAGVLLRYIPITAKRTTGIVSRGGSIMAQWCLFHHKENFLYTHFEEICEIMKQYDVSFSLGDGLRPGSIADANDEAQFSELETLGELTKIAWKHDVQVMIEGPGHVPMHLIKENMEKELDICQGAPFYTLGPLTTDIAPGYDHITSAIGAAMIGWFGTAMLCYVTPKEHLGLPNKDDVREGVITYKIAAHAADLAKGHKTAHQRDDALSKARFEFRWRDQFNLSLDPERAMEYHDETLPAEGAKTAHFCSMCGPKFCSMRISHDIREYAKENDLETTEAIEKGMKEKAKEFKETGSHLYQ.

The segment at M1–P59 is disordered. Over residues V22–E39 the composition is skewed to basic and acidic residues. Substrate is bound by residues N193, M222, Y251, H287, S307–G309, D348–R351, and E387. H391 contacts Zn(2+). Residue Y414 coordinates substrate. H455 contacts Zn(2+). Residues C535, C538, and C543 each contribute to the [4Fe-4S] cluster site.

It belongs to the ThiC family. Requires [4Fe-4S] cluster as cofactor.

It carries out the reaction 5-amino-1-(5-phospho-beta-D-ribosyl)imidazole + S-adenosyl-L-methionine = 4-amino-2-methyl-5-(phosphooxymethyl)pyrimidine + CO + 5'-deoxyadenosine + formate + L-methionine + 3 H(+). It functions in the pathway cofactor biosynthesis; thiamine diphosphate biosynthesis. Catalyzes the synthesis of the hydroxymethylpyrimidine phosphate (HMP-P) moiety of thiamine from aminoimidazole ribotide (AIR) in a radical S-adenosyl-L-methionine (SAM)-dependent reaction. The polypeptide is Phosphomethylpyrimidine synthase (Bacillus cereus (strain ATCC 10987 / NRS 248)).